Consider the following 442-residue polypeptide: Cyclic adenylate deaminase (442 aa).

This sequence belongs to the metallo-dependent hydrolases superfamily. Adenosine and AMP deaminases family. It depends on Zn(2+) as a cofactor.

The enzyme catalyses 3',5'-cyclic AMP + H2O + H(+) = 3',5'-cyclic IMP + NH4(+). Deaminates cAMP into cIMP, thereby repressing cAMP dependent metabolism or genes. The sequence is that of Cyclic adenylate deaminase (add) from Leptospira interrogans serogroup Icterohaemorrhagiae serovar copenhageni (strain Fiocruz L1-130).